The primary structure comprises 453 residues: MKKCSYDYKLNNVNDPNFYKDIFPYEEVPKIVFNNIQLPMDLPDNIYITDTTFRDGQQSMPPYTSREIVRIFDYLHELDNNSGIIKQTEFFLYTKKDRKAAEVCMERGYEFPEVTSWIRADKEDLKLVKDMGIKETGMLMSCSDYHIFKKLKMTRKETMDMYLDLAREALNNGIRPRCHLEDITRADFYGFVVPFVNELMKMSKEANIPIKIRACDTLGLGVPYNGVEIPRSVQGIIHGLRNICEVPSESIEWHGHNDFYGVVTNSSTAWLYGASSINTSFLGIGERTGNCPLEAMIFEYAQIKGNTKNMKLHVITELAQYFEKEIKYSVPVRTPFVGTDFNVTRAGIHADGILKDEEIYNIFDTDKILGRPVVVAVSQYSGRAGIAAWVNTYYRLKDEDKVNKNDSRIDQIKMWVDEQYRAGRTSVIGNNELELLVSKVMPEVIEKTEERAS.

Residues 46 to 316 (IYITDTTFRD…TKNMKLHVIT (271 aa)) form the Pyruvate carboxyltransferase domain.

The protein belongs to the alpha-IPM synthase/homocitrate synthase family. It depends on Mn(2+) as a cofactor. Co(2+) is required as a cofactor. The cofactor is Mg(2+).

It carries out the reaction oxaloacetate + acetyl-CoA + H2O = citrate + CoA + H(+). Its activity is regulated as follows. Inhibited by p-chloromercuribenzoate (pCMB), EDTA, Zn(2+) ions, and under aerobic conditions. Its function is as follows. Catalyzes the condensation of the acetyl group of acetyl-CoA with oxaloacetate to form citrate. This enzyme is highly Re-face stereospecific with respect to the C-2 of oxaloacetate. This chain is Citrate (Re)-synthase, found in Clostridium kluyveri (strain ATCC 8527 / DSM 555 / NBRC 12016 / NCIMB 10680 / K1).